A 552-amino-acid chain; its full sequence is MEKVQQTIRAPRGTELQTKGWVQEAALRMLMNNLDPEVAEKPEELVVYGGIGRAARNWESYNAIVDSLKTLESDETLLVQSGKPVAIFKSHEDAPRVLLANSNLVPKWANWDHFRELEKKGLMMYGQMTAGSWIYIGTQGILQGTYETFGEAARQHFDGSLKGTLTLTAGLGGMGGAQPLAVTMNGGVVIAIDVDKRSIDRRIEKRYCDKYTESLEEALAIANEYKEKKEPISIGLLGNAAEILPELVNRNIIPDLVTDQTSAHDPLNGYIPVGYTLEEAAKLREEDPERYVQLSKESMTKHVEAMLAMQEKGAITFDYGNNIRQVAFDEGLKNAFDFPGFVPAFIRPLFCEGKGPFRWVALSGDPEDIYKTDEVILREFADNEHLCNWIRMARQQVEFQGLPSRICWLGYGERAKFGRIINEMVANGELSAPIVIGRDHLDCGSVASPNRETEAMKDGSDAVADWPILNALINSVNGASWVSVHHGGGVGMGYSLHAGMVIVADGTEAAAKRIERVLTSDPGMGIVRHVDAGYDLAVETAKEKGVNIPMMK.

Residues 49–50, Q127, 173–175, D193, 239–240, 260–264, 270–271, and Y319 each bind NAD(+); these read GG, GMG, NA, QTSAH, and YI. The active site involves C407. NAD(+) is bound at residue G489.

The protein belongs to the urocanase family. The cofactor is NAD(+).

The protein localises to the cytoplasm. It carries out the reaction 4-imidazolone-5-propanoate = trans-urocanate + H2O. It participates in amino-acid degradation; L-histidine degradation into L-glutamate; N-formimidoyl-L-glutamate from L-histidine: step 2/3. Functionally, catalyzes the conversion of urocanate to 4-imidazolone-5-propionate. The chain is Urocanate hydratase from Bacillus cereus (strain G9842).